Here is a 342-residue protein sequence, read N- to C-terminus: Immune-associated nucleotide-binding protein 9 (342 aa).

The AIG1-type G domain maps to 22–229 (NPKRTLVLVG…YSDELFHELQ (208 aa)). A G1 region spans residues 31–38 (GRTGNGKS). Residues 31–39 (GRTGNGKSA) and S52 each bind GTP. The tract at residues 58 to 62 (GVTST) is G2. The G3 stretch occupies residues 80 to 83 (DTPG). The tract at residues 149–152 (TGGD) is G4. A G5 region spans residues 188-190 (NNK). Position 189 (N189) interacts with GTP. A coiled-coil region spans residues 276–342 (ETKLRDTAKR…QKKLGKCINL (67 aa)).

The protein belongs to the TRAFAC class TrmE-Era-EngA-EngB-Septin-like GTPase superfamily. AIG1/Toc34/Toc159-like paraseptin GTPase family. IAN subfamily. As to expression, mainly expressed in leaves.

The protein is Immune-associated nucleotide-binding protein 9 of Arabidopsis thaliana (Mouse-ear cress).